Here is a 200-residue protein sequence, read N- to C-terminus: Dephospho-CoA kinase (200 aa).

Positions 3 to 200 constitute a DPCK domain; that stretch reads IIGLTGGIGS…LWQRFATQVE (198 aa). Position 11–16 (11–16) interacts with ATP; sequence GSGKST.

This sequence belongs to the CoaE family.

The protein resides in the cytoplasm. The catalysed reaction is 3'-dephospho-CoA + ATP = ADP + CoA + H(+). Its pathway is cofactor biosynthesis; coenzyme A biosynthesis; CoA from (R)-pantothenate: step 5/5. Its function is as follows. Catalyzes the phosphorylation of the 3'-hydroxyl group of dephosphocoenzyme A to form coenzyme A. The chain is Dephospho-CoA kinase from Corynebacterium diphtheriae (strain ATCC 700971 / NCTC 13129 / Biotype gravis).